The sequence spans 202 residues: MNTLYLGSGSPRRMEILTQLGYRVVKLPAGIDETVKAGETPAPYVQRMAEEKNQAALTLFCETNGAMPDFPLITADTCVFSDGIILGKPRSQAEAIEFLNRLSGKQHTVLTAVCIHYRGKTSSRVQTNRVVFKPLSSEEISAYVQSGEPMEKAGAYAVQGIGGIFIQSIEGSFSGIMGLPVYETVSMLQDLGYRPPLSALKP.

Catalysis depends on D76, which acts as the Proton acceptor.

Belongs to the Maf family. YhdE subfamily. The cofactor is a divalent metal cation.

The protein localises to the cytoplasm. The catalysed reaction is dTTP + H2O = dTMP + diphosphate + H(+). It carries out the reaction UTP + H2O = UMP + diphosphate + H(+). Functionally, nucleoside triphosphate pyrophosphatase that hydrolyzes dTTP and UTP. May have a dual role in cell division arrest and in preventing the incorporation of modified nucleotides into cellular nucleic acids. The polypeptide is dTTP/UTP pyrophosphatase (Neisseria gonorrhoeae (strain ATCC 700825 / FA 1090)).